A 144-amino-acid chain; its full sequence is Peptide methionine sulfoxide reductase MsrB (144 aa).

The 123-residue stretch at 5–127 (KEEKIKSLNR…NSAALRFIPK (123 aa)) folds into the MsrB domain. The active-site Nucleophile is the Cys116.

It belongs to the MsrB Met sulfoxide reductase family.

It carries out the reaction L-methionyl-[protein] + [thioredoxin]-disulfide + H2O = L-methionyl-(R)-S-oxide-[protein] + [thioredoxin]-dithiol. This is Peptide methionine sulfoxide reductase MsrB from Bacillus velezensis (strain DSM 23117 / BGSC 10A6 / LMG 26770 / FZB42) (Bacillus amyloliquefaciens subsp. plantarum).